Consider the following 546-residue polypeptide: NRAMP-like transporter smf-2 (546 aa).

Over 1-42 (MPGFQNANISDLAPPAREKTFDDTIAVKIPEDEKNTWFSWRK) the chain is Cytoplasmic. Residues 43 to 63 (LWAFTGPGFLMSIAYLDPGNI) form a helical membrane-spanning segment. Residues 64-70 (ESDLQAG) lie on the Extracellular side of the membrane. The chain crosses the membrane as a helical span at residues 71 to 91 (AQAEYKLLWVLLVSHIVGMLL). At 92 to 119 (QRMSARLGVVSGKHMAEIAYDYYPLVPR) the chain is on the cytoplasmic side. Residues 120–140 (IILWLMIEIAIVCSDMQEVIG) form a helical membrane-spanning segment. The Extracellular portion of the chain corresponds to 141–152 (TAIAIYLLSSGK). Residues 153–173 (IPLLVGVLITILDTFTFLFID) form a helical membrane-spanning segment. Over 174 to 181 (RYGIRKLE) the chain is Cytoplasmic. A helical transmembrane segment spans residues 182–202 (FIFVALISTMAISFGYEFVVM). At 203-228 (KPVLTKVLTGTVVPWCSGCGKEEIIT) the chain is on the extracellular side. The chain crosses the membrane as a helical span at residues 229–249 (AISIFGAVIMPHNFYLHSALV). The Cytoplasmic portion of the chain corresponds to 250–270 (KSRKVDRSSKTRIAEANKYFS). The chain crosses the membrane as a helical span at residues 271–291 (IESAFALSVSFFINLFVLSVF). Residues 292–334 (ARGLYQKTNGDVNSMCLSHNDIPDSNVFPNNTSSVTVDLFQGG) lie on the Extracellular side of the membrane. The N-linked (GlcNAc...) asparagine glycan is linked to N321. A helical membrane pass occupies residues 335–355 (IYLGCQFGLFAMIIWAIGIFA). Over 356 to 386 (AGQSSTMTGTYTGQFVMEGFVRISWPKWKRV) the chain is Cytoplasmic. Residues 387 to 407 (LITRAVAITPTLILCIKAHGI) form a helical membrane-spanning segment. The Extracellular segment spans residues 408-415 (KNLTGMND). Residue N409 is glycosylated (N-linked (GlcNAc...) asparagine). A helical transmembrane segment spans residues 416–436 (FLNCVQMVQLPFALIPMITFT). The Cytoplasmic segment spans residues 437–453 (SSKRIMHNFRTSKPLQY). A helical membrane pass occupies residues 454 to 474 (FSIICGIITIGINVYFIFQYV). Over 475–483 (TENFGTGWL) the chain is Extracellular. Residues 484-504 (IFVIIGPFTLLYIAFILYLAI) traverse the membrane as a helical segment. Residues 505 to 546 (YCLVACELMNDTVNLPGFDFHRTLELDAPWITETFVVNDVYF) lie on the Cytoplasmic side of the membrane.

This sequence belongs to the NRAMP family. Expressed in dopaminergic neurons (at protein level). Primarily expressed in mc1, mc2 and mc3 epithelial cells of the pharynx and vpil-6 pharyngeal-intestinal valve cells displaying an anterior-posterior expression gradient. Expressed in gonad sheath cells.

It is found in the apical cell membrane. Its subcellular location is the cytoplasmic vesicle membrane. In terms of biological role, probable divalent metal ion transporter which regulates Mn(2+) uptake. The protein is NRAMP-like transporter smf-2 of Caenorhabditis elegans.